We begin with the raw amino-acid sequence, 505 residues long: 2,3-bisphosphoglycerate-independent phosphoglycerate mutase (505 aa).

Residues Asp11 and Ser61 each contribute to the Mn(2+) site. The active-site Phosphoserine intermediate is Ser61. Residues His122, 152 to 153, Arg184, Arg190, 258 to 261, and Lys331 contribute to the substrate site; these read RD and RPDR. Residues Asp396, His400, Asp437, His438, and His455 each contribute to the Mn(2+) site.

Belongs to the BPG-independent phosphoglycerate mutase family. As to quaternary structure, monomer. Mn(2+) is required as a cofactor.

It carries out the reaction (2R)-2-phosphoglycerate = (2R)-3-phosphoglycerate. Its pathway is carbohydrate degradation; glycolysis; pyruvate from D-glyceraldehyde 3-phosphate: step 3/5. Catalyzes the interconversion of 2-phosphoglycerate and 3-phosphoglycerate. The sequence is that of 2,3-bisphosphoglycerate-independent phosphoglycerate mutase from Mesomycoplasma hyopneumoniae (strain J / ATCC 25934 / NCTC 10110) (Mycoplasma hyopneumoniae).